Consider the following 771-residue polypeptide: Tetratricopeptide repeat-containing protein trd-1 (771 aa).

6 TPR repeats span residues 389-415 (LEMW…IRRL), 416-449 (IEQK…SDDR), 451-484 (ARAH…QPIQ), 485-518 (LGTW…QPDH), 520-552 (EAWN…NYEH), and 553-586 (PNVW…NKRG).

The protein belongs to the TTC27 family. Expressed in the spermatheca.

The protein localises to the cytoplasm. Functionally, developmental protein required for cell fate determination in both the germline and seam cells of the developing epidermis. Specifically, involved in sex determination and may function in parallel or downstream of other sex determination factors, including tra-2 and fem-3, to promote oogenesis in its role in the regulation of the switch from spermatogenesis to oogenesis in the gonads. Also implicated in the mitosis to meiosis switch in distal tip cells. The chain is Tetratricopeptide repeat-containing protein trd-1 from Caenorhabditis elegans.